The primary structure comprises 275 residues: Collectin-10 (275 aa).

The signal sequence occupies residues 1–25 (MKYGKLWPIGVSVLGVIALHVRVLS). N30 is a glycosylation site (N-linked (GlcNAc...) asparagine). The segment at 39–76 (THTILPGPKGDDGEAGDTGVLGKLGKDGPKGQKGNKGI) is disordered. Residues 51 to 110 (GEAGDTGVLGKLGKDGPKGQKGNKGIIGDSGDLGLIGKIGPIGSKGDKGHKGLPGLPGGK) form the Collagen-like domain. Residues 153 to 269 (TDEKYYYIVR…CSLTIYFVCE (117 aa)) form the C-type lectin domain. 2 cysteine pairs are disulfide-bonded: C174-C268 and C246-C260.

This sequence belongs to the COLEC10/COLEC11 family.

The protein resides in the secreted. Its function is as follows. Lectin that binds to various sugars: galactose &gt; mannose = fucose &gt; N-acetylglucosamine &gt; N-acetylgalactosamine. This is Collectin-10 (colec10) from Xenopus tropicalis (Western clawed frog).